The sequence spans 407 residues: Proteasome-activating nucleotidase (407 aa).

Residues 22 to 67 adopt a coiled-coil conformation; the sequence is KEKTQIAELESKVLRLELKNKDISRENVQIKKENEILKRELDKLRI. ATP is bound by residues 192–197 and histidine 331; that span reads GTGKTL. Residues 405 to 407 form a docks into pockets in the proteasome alpha-ring to cause gate opening region; sequence MYG.

The protein belongs to the AAA ATPase family. In terms of assembly, homohexamer. The hexameric complex has a two-ring architecture resembling a top hat that caps the 20S proteasome core at one or both ends. Upon ATP-binding, the C-terminus of PAN interacts with the alpha-rings of the proteasome core by binding to the intersubunit pockets.

Its subcellular location is the cytoplasm. Functionally, ATPase which is responsible for recognizing, binding, unfolding and translocation of substrate proteins into the archaeal 20S proteasome core particle. Is essential for opening the gate of the 20S proteasome via an interaction with its C-terminus, thereby allowing substrate entry and access to the site of proteolysis. Thus, the C-termini of the proteasomal ATPase function like a 'key in a lock' to induce gate opening and therefore regulate proteolysis. Unfolding activity requires energy from ATP hydrolysis, whereas ATP binding alone promotes ATPase-20S proteasome association which triggers gate opening, and supports translocation of unfolded substrates. The chain is Proteasome-activating nucleotidase from Methanococcus maripaludis (strain C6 / ATCC BAA-1332).